The sequence spans 420 residues: Gamma-glutamyl phosphate reductase (420 aa).

Belongs to the gamma-glutamyl phosphate reductase family.

It localises to the cytoplasm. It carries out the reaction L-glutamate 5-semialdehyde + phosphate + NADP(+) = L-glutamyl 5-phosphate + NADPH + H(+). Its pathway is amino-acid biosynthesis; L-proline biosynthesis; L-glutamate 5-semialdehyde from L-glutamate: step 2/2. Its function is as follows. Catalyzes the NADPH-dependent reduction of L-glutamate 5-phosphate into L-glutamate 5-semialdehyde and phosphate. The product spontaneously undergoes cyclization to form 1-pyrroline-5-carboxylate. This Streptococcus pneumoniae (strain JJA) protein is Gamma-glutamyl phosphate reductase.